A 227-amino-acid polypeptide reads, in one-letter code: ATP synthase F(0) complex subunit a (227 aa).

6 helical membrane passes run 14 to 34 (FLGI…FPTP), 69 to 89 (WAIL…LGLL), 99 to 119 (LSLN…IGMF), 139 to 159 (VPVL…ALGV), 165 to 185 (LTAG…LLTM), and 190 to 210 (ALLT…VAMI).

It belongs to the ATPase A chain family. Component of the ATP synthase complex composed at least of ATP5F1A/subunit alpha, ATP5F1B/subunit beta, ATP5MC1/subunit c (homooctomer), MT-ATP6/subunit a, MT-ATP8/subunit 8, ATP5ME/subunit e, ATP5MF/subunit f, ATP5MG/subunit g, ATP5MK/subunit k, ATP5MJ/subunit j, ATP5F1C/subunit gamma, ATP5F1D/subunit delta, ATP5F1E/subunit epsilon, ATP5PF/subunit F6, ATP5PB/subunit b, ATP5PD/subunit d, ATP5PO/subunit OSCP. ATP synthase complex consists of a soluble F(1) head domain (subunits alpha(3) and beta(3)) - the catalytic core - and a membrane F(0) domain - the membrane proton channel (subunits c, a, 8, e, f, g, k and j). These two domains are linked by a central stalk (subunits gamma, delta, and epsilon) rotating inside the F1 region and a stationary peripheral stalk (subunits F6, b, d, and OSCP). Interacts with DNAJC30; interaction is direct.

It is found in the mitochondrion inner membrane. The catalysed reaction is H(+)(in) = H(+)(out). Subunit a, of the mitochondrial membrane ATP synthase complex (F(1)F(0) ATP synthase or Complex V) that produces ATP from ADP in the presence of a proton gradient across the membrane which is generated by electron transport complexes of the respiratory chain. ATP synthase complex consist of a soluble F(1) head domain - the catalytic core - and a membrane F(1) domain - the membrane proton channel. These two domains are linked by a central stalk rotating inside the F(1) region and a stationary peripheral stalk. During catalysis, ATP synthesis in the catalytic domain of F(1) is coupled via a rotary mechanism of the central stalk subunits to proton translocation. With the subunit c (ATP5MC1), forms the proton-conducting channel in the F(0) domain, that contains two crucial half-channels (inlet and outlet) that facilitate proton movement from the mitochondrial intermembrane space (IMS) into the matrix. Protons are taken up via the inlet half-channel and released through the outlet half-channel, following a Grotthuss mechanism. The sequence is that of ATP synthase F(0) complex subunit a from Scyliorhinus canicula (Small-spotted catshark).